Reading from the N-terminus, the 969-residue chain is Exoribonuclease II, mitochondrial (969 aa).

The transit peptide at 1-41 (MVVRRKVHVLLIARSFHSYTPCFRVTTRGKRQRSKSKQQAK) directs the protein to the mitochondrion. Residues 28-38 (RGKRQRSKSKQ) are compositionally biased toward basic residues. Residues 28 to 54 (RGKRQRSKSKQQAKVELDHTRELDNDQ) are disordered. Over residues 40–51 (AKVELDHTRELD) the composition is skewed to basic and acidic residues. Positions 522-853 (RYDFGDLRVF…NHLQIHRHLQ (332 aa)) constitute an RNB domain.

Belongs to the RNR ribonuclease family. MSU1 and SUV3 are the two components of the mitochondrial degradosome (mtEXO).

It is found in the mitochondrion matrix. The catalysed reaction is Exonucleolytic cleavage in the 3'- to 5'-direction to yield nucleoside 5'-phosphates.. Its function is as follows. Essential for mitochondrial biogenesis. Functionally, required for intron-independent turnover and processing of mitochondrial RNA. Participates in 3' mtRNA processing where it hydrolyzes single-stranded RNA or partially double-stranded RNA with 3' single-stranded tails. The sequence is that of Exoribonuclease II, mitochondrial (DSS1) from Saccharomyces cerevisiae (strain ATCC 204508 / S288c) (Baker's yeast).